A 135-amino-acid polypeptide reads, in one-letter code: Early E3 15.3 kDa protein (135 aa).

It belongs to the adenoviridae E3_15 family.

Protects virus-infected cells from TNF-induced cytolysis. The polypeptide is Early E3 15.3 kDa protein (Human adenovirus B serotype 7 (HAdV-7)).